Here is a 93-residue protein sequence, read N- to C-terminus: Large ribosomal subunit protein eL42 (93 aa).

Residues Cys11 and Cys14 each coordinate Zn(2+). The C4-type zinc-finger motif lies at 11-75; the sequence is CPNCDEHHQL…TDLKYRCSEC (65 aa). A disordered region spans residues 24–62; it reads KVRSGRSSGMKWDARRTKRANASIGNHGRFSKVPVGNKP. Zn(2+) is bound by residues Cys72 and Cys75.

It belongs to the eukaryotic ribosomal protein eL42 family. In terms of assembly, part of the 50S ribosomal subunit. Zn(2+) is required as a cofactor.

Functionally, binds to the 23S rRNA. This is Large ribosomal subunit protein eL42 from Halobacterium salinarum (strain ATCC 700922 / JCM 11081 / NRC-1) (Halobacterium halobium).